Here is a 66-residue protein sequence, read N- to C-terminus: Cold shock-like protein (66 aa).

The CSD domain maps to 3–62 (GKVKWFDSKKGYGFITKDEGGDVFVHWSAIEMEGFKTLKEGQVVEFEIQEGKKGPQAAHV).

Monomer.

The protein localises to the cytoplasm. The protein is Cold shock-like protein (csp) of Thermotoga maritima (strain ATCC 43589 / DSM 3109 / JCM 10099 / NBRC 100826 / MSB8).